The sequence spans 296 residues: MTAKRIDGKAFAAGVRAQVADHVARLKADHGLVPGLAVVLVGEDPASQVYVGAKGKQTVEVGMASFEHRLSAETSEAELLALIDRLNRDPLVHGILVQLPLPPHLNSDLVINALDPAKDVDGFHISNVGRLGTGQKSMVPCTPLGCLMMLRDHLGNLSGLNAVVVGRSNIVGKPMAQLLLGESCTVTIAHSRTKDLAAVCRGADILVAAVGRPEMITGEFIKPGATVIDVGINRIERDGKTKLVGDVDFASAAEVAGAITPVPGGVGPMTIACLLANTLTACCRANGLPEPQGLTA.

Residues 166 to 168 (GRS), serine 191, and isoleucine 232 each bind NADP(+).

Belongs to the tetrahydrofolate dehydrogenase/cyclohydrolase family. In terms of assembly, homodimer.

The catalysed reaction is (6R)-5,10-methylene-5,6,7,8-tetrahydrofolate + NADP(+) = (6R)-5,10-methenyltetrahydrofolate + NADPH. It catalyses the reaction (6R)-5,10-methenyltetrahydrofolate + H2O = (6R)-10-formyltetrahydrofolate + H(+). It participates in one-carbon metabolism; tetrahydrofolate interconversion. Functionally, catalyzes the oxidation of 5,10-methylenetetrahydrofolate to 5,10-methenyltetrahydrofolate and then the hydrolysis of 5,10-methenyltetrahydrofolate to 10-formyltetrahydrofolate. The chain is Bifunctional protein FolD from Cereibacter sphaeroides (strain ATCC 17025 / ATH 2.4.3) (Rhodobacter sphaeroides).